A 240-amino-acid chain; its full sequence is Glutathione S-transferase omega-1 (240 aa).

S2 carries the N-acetylserine modification. The GST N-terminal domain maps to 22-101 (GQIRVYSMRF…YLDEAYPEKK (80 aa)). C32 functions as the Nucleophile in the catalytic mechanism. The residue at position 57 (K57) is an N6-acetyllysine. Residues K59, V72, and 85-86 (ES) contribute to the glutathione site. Residues 106-227 (DPYKKARQKM…AKTYREYLNL (122 aa)) form the GST C-terminal domain. The residue at position 129 (S129) is a Phosphoserine. K152 is subject to N6-acetyllysine.

Belongs to the GST superfamily. Omega family. As to quaternary structure, homodimer.

Its subcellular location is the cytoplasm. The protein resides in the cytosol. It carries out the reaction RX + glutathione = an S-substituted glutathione + a halide anion + H(+). The catalysed reaction is L-dehydroascorbate + 2 glutathione = glutathione disulfide + L-ascorbate. It catalyses the reaction methylarsonate + 2 glutathione + H(+) = methylarsonous acid + glutathione disulfide + H2O. Exhibits glutathione-dependent thiol transferase and dehydroascorbate reductase activities. Has S-(phenacyl)glutathione reductase activity. Also has glutathione S-transferase activity. Participates in the biotransformation of inorganic arsenic and reduces monomethylarsonic acid (MMA) and dimethylarsonic acid. This chain is Glutathione S-transferase omega-1 (Gsto1), found in Mus musculus (Mouse).